The following is a 248-amino-acid chain: 2,3-bisphosphoglycerate-dependent phosphoglycerate mutase (248 aa).

Residues 8 to 15, 21 to 22, Arg-60, 87 to 90, Lys-98, 114 to 115, and 183 to 184 each bind substrate; these read RHGESLWN, TG, ERHY, RR, and GN. His-9 serves as the catalytic Tele-phosphohistidine intermediate. Residue Glu-87 is the Proton donor/acceptor of the active site.

The protein belongs to the phosphoglycerate mutase family. BPG-dependent PGAM subfamily.

The enzyme catalyses (2R)-2-phosphoglycerate = (2R)-3-phosphoglycerate. It participates in carbohydrate degradation; glycolysis; pyruvate from D-glyceraldehyde 3-phosphate: step 3/5. Catalyzes the interconversion of 2-phosphoglycerate and 3-phosphoglycerate. This chain is 2,3-bisphosphoglycerate-dependent phosphoglycerate mutase, found in Methanospirillum hungatei JF-1 (strain ATCC 27890 / DSM 864 / NBRC 100397 / JF-1).